The following is a 208-amino-acid chain: Thymidylate kinase (208 aa).

13-20 (GLEGAGKS) provides a ligand contact to ATP.

Belongs to the thymidylate kinase family.

The enzyme catalyses dTMP + ATP = dTDP + ADP. Its function is as follows. Phosphorylation of dTMP to form dTDP in both de novo and salvage pathways of dTTP synthesis. The polypeptide is Thymidylate kinase (Shewanella amazonensis (strain ATCC BAA-1098 / SB2B)).